Consider the following 487-residue polypeptide: Serine/threonine-protein kinase 4 (487 aa).

Residue Met-1 is modified to N-acetylmethionine. At Thr-3 the chain carries Phosphothreonine. Positions 30-281 (FDVLEKLGEG…ATQLLQHPFV (252 aa)) constitute a Protein kinase domain. Residues 36–44 (LGEGSYGSV) and Lys-59 each bind ATP. Asp-149 (proton acceptor) is an active-site residue. Thr-183 is subject to Phosphothreonine; by autocatalysis. Ser-265 is modified (phosphoserine). Positions 290–310 (LRDLINEAMDVKLKRQEAQQR) form a coiled coil. Positions 305–337 (QEAQQREVDQDDEENSEEDELDSGTMVRAVGDE) are disordered. The segment covering 313 to 326 (DQDDEENSEEDELD) has biased composition (acidic residues). Ser-320 is subject to Phosphoserine. Phosphothreonine is present on residues Thr-340 and Thr-367. Residue Thr-387 is modified to Phosphothreonine; by PKB/AKT1. Phosphoserine is present on residues Ser-410 and Ser-414. Tyr-433 carries the post-translational modification Phosphotyrosine. The region spanning 433-480 (YEFLKSWTVEDLQKRLLALDPMMEQEIEEIRQKYQSKRQPILDAIEAK) is the SARAH domain.

The protein belongs to the protein kinase superfamily. STE Ser/Thr protein kinase family. STE20 subfamily. In terms of assembly, homodimer; mediated via the coiled-coil region. Interacts with NORE1, which inhibits autoactivation. Interacts with and stabilizes SAV1. Interacts with RASSF1. Interacts with FOXO3. Interacts with RASSF2 (via SARAH domain). Interacts with AR, PKB/AKT1, TNNI3 and SIRT1. Interacts with DLG5 (via PDZ domain 3). Interacts with MARK3 and SCRIB in the presence of DLG5. Requires Mg(2+) as cofactor. Post-translationally, autophosphorylated on serine and threonine residues. Phosphorylation at Thr-387 by PKB/AKT1, leads to inhibition of its: kinase activity, nuclear translocation and autophosphorylation at Thr-183. It also diminishes its cleavage by caspases and its ability to phosphorylate FOXO3. In terms of processing, proteolytically cleaved by caspase-3 during apoptosis at Asp-326 and Asp-349 resulting in a 37 kDa or a 39 kDa subunit respectively. The 39 kDa subunit is further cleaved into the 37 kDa form. Proteolytic cleavage results in kinase activation and nuclear translocation of the truncated form (MST1/N). It is less likely that cleavage at Asp-349 is a prerequisite for activation as this site is not conserved in the murine ortholog.

Its subcellular location is the cytoplasm. The protein resides in the nucleus. It catalyses the reaction L-seryl-[protein] + ATP = O-phospho-L-seryl-[protein] + ADP + H(+). It carries out the reaction L-threonyl-[protein] + ATP = O-phospho-L-threonyl-[protein] + ADP + H(+). Inhibited by the C-terminal non-catalytic region. Activated by caspase-cleavage. Full activation also requires homodimerization and autophosphorylation of Thr-183. Activated by RASSF1 which acts by preventing its dephosphorylation. Stress-activated, pro-apoptotic kinase which, following caspase-cleavage, enters the nucleus and induces chromatin condensation followed by internucleosomal DNA fragmentation. Key component of the Hippo signaling pathway which plays a pivotal role in organ size control and tumor suppression by restricting proliferation and promoting apoptosis. The core of this pathway is composed of a kinase cascade wherein STK3/MST2 and STK4/MST1, in complex with its regulatory protein SAV1, phosphorylates and activates LATS1/2 in complex with its regulatory protein MOB1, which in turn phosphorylates and inactivates YAP1 oncoprotein and WWTR1/TAZ. Phosphorylation of YAP1 by LATS2 inhibits its translocation into the nucleus to regulate cellular genes important for cell proliferation, cell death, and cell migration. STK3/MST2 and STK4/MST1 are required to repress proliferation of mature hepatocytes, to prevent activation of facultative adult liver stem cells (oval cells), and to inhibit tumor formation. Phosphorylates 'Ser-14' of histone H2B (H2BS14ph) during apoptosis. Phosphorylates FOXO3 upon oxidative stress, which results in its nuclear translocation and cell death initiation. Phosphorylates MOBKL1A, MOBKL1B and RASSF2. Phosphorylates TNNI3 (cardiac Tn-I) and alters its binding affinity to TNNC1 (cardiac Tn-C) and TNNT2 (cardiac Tn-T). Phosphorylates FOXO1 on 'Ser-212' and regulates its activation and stimulates transcription of PMAIP1 in a FOXO1-dependent manner. Phosphorylates SIRT1 and inhibits SIRT1-mediated p53/TP53 deacetylation, thereby promoting p53/TP53 dependent transcription and apoptosis upon DNA damage. Acts as an inhibitor of PKB/AKT1. Phosphorylates AR on 'Ser-650' and suppresses its activity by intersecting with PKB/AKT1 signaling and antagonizing formation of AR-chromatin complexes. The protein is Serine/threonine-protein kinase 4 (STK4) of Otolemur garnettii (Small-eared galago).